The sequence spans 347 residues: GMP reductase (347 aa).

Ala-108–Ala-131 provides a ligand contact to NADP(+). K(+)-binding residues include Gly-181 and Gly-183. The active-site Thioimidate intermediate is Cys-186. Ile-216–Val-239 contributes to the NADP(+) binding site.

This sequence belongs to the IMPDH/GMPR family. GuaC type 1 subfamily. Homotetramer.

The catalysed reaction is IMP + NH4(+) + NADP(+) = GMP + NADPH + 2 H(+). Catalyzes the irreversible NADPH-dependent deamination of GMP to IMP. It functions in the conversion of nucleobase, nucleoside and nucleotide derivatives of G to A nucleotides, and in maintaining the intracellular balance of A and G nucleotides. This is GMP reductase from Vibrio campbellii (strain ATCC BAA-1116).